Consider the following 638-residue polypeptide: Glucans biosynthesis glucosyltransferase H (638 aa).

The next 6 helical transmembrane spans lie at 60-82 (FYLI…AVMW), 97-119 (FMFL…FCVV), 415-437 (IGHY…IPLV), 464-486 (LWIF…FALL), 499-521 (LRVL…VVMY), and 578-600 (LAMW…ALTS).

It belongs to the glycosyltransferase 2 family. OpgH subfamily.

It is found in the cell inner membrane. It functions in the pathway glycan metabolism; osmoregulated periplasmic glucan (OPG) biosynthesis. Functionally, involved in the biosynthesis of osmoregulated periplasmic glucans (OPGs). The sequence is that of Glucans biosynthesis glucosyltransferase H from Xylella fastidiosa (strain 9a5c).